A 628-amino-acid polypeptide reads, in one-letter code: Biosynthetic arginine decarboxylase (628 aa).

An N6-(pyridoxal phosphate)lysine modification is found at Lys-99. A substrate-binding site is contributed by 279-289 (VDVGGGLGIDY).

It belongs to the Orn/Lys/Arg decarboxylase class-II family. SpeA subfamily. Mg(2+) is required as a cofactor. It depends on pyridoxal 5'-phosphate as a cofactor.

It carries out the reaction L-arginine + H(+) = agmatine + CO2. Catalyzes the biosynthesis of agmatine from arginine. The polypeptide is Biosynthetic arginine decarboxylase (Xanthomonas campestris pv. campestris (strain ATCC 33913 / DSM 3586 / NCPPB 528 / LMG 568 / P 25)).